The primary structure comprises 311 residues: m7GpppX diphosphatase (311 aa).

Residues E159, K181, and 242 to 253 contribute to the substrate site; that span reads HYQPSFYHLHVH. Positions 249–253 match the Histidine triad motif motif; the sequence is HLHVH. H251 functions as the Nucleophile in the catalytic mechanism.

It belongs to the HIT family. Expressed in neurons in the ventral cord, the nerve ring and the pharynx.

The protein resides in the nucleus. The catalysed reaction is a 5'-end (N(7)-methyl 5'-triphosphoguanosine)-ribonucleoside in mRNA + H2O = N(7)-methyl-GMP + a 5'-end diphospho-ribonucleoside in mRNA + 2 H(+). The enzyme catalyses a 5'-end (N(2),N(2),N(7)-trimethyl 5'-triphosphoguanosine)-ribonucleoside in mRNA + H2O = (N(2),N(2),N(7))-trimethyl-GMP + a 5'-end diphospho-ribonucleoside in mRNA + 2 H(+). Its activity is regulated as follows. The hydrolytic product 7-methylguanosine diphosphate (m7GDP) efficiently inhibits the decapping scavenger activity and acts as a competitive inhibitor in vitro. Functionally, decapping scavenger enzyme that catalyzes the cleavage of a residual cap structure following the degradation of mRNAs of the 3'-&gt;5' exosome-mediated mRNA decay pathway. Hydrolyzes cap analog structures like 7-methylguanosine nucleoside triphosphate (m7GpppG) and tri-methyl guanosine nucleoside triphosphate (m3(2,2,7)GpppG) with up to 2 nucleotide substrates (small capped oligoribonucleotides) and specifically releases 5'-phosphorylated RNA fragments and 7-methylguanosine monophosphate (m7GMP). Does not hydrolyze unmethylated cap analog (GpppG) and shows no decapping activity on intact m7GpppG-capped mRNA molecules. Does not hydrolyze 7-methylguanosine diphosphate (m7GDP) and tri-methylguanosine diphosphate (m3(2,2,7)GDP) to m(7)GMP and m3(2,2,7)GMP, respectively. May also play a role in the 5'-&gt;3 mRNA decay pathway; m7GDP, the downstream product released by the 5'-&gt;3' mRNA mediated decapping activity, may be also converted by dcs-1 to m7GMP. Binds to m7GpppG and strongly to m7GDP. This Caenorhabditis elegans protein is m7GpppX diphosphatase (dcs-1).